Here is a 92-residue protein sequence, read N- to C-terminus: PqqA binding protein (92 aa).

Belongs to the PqqD family. In terms of assembly, monomer. Interacts with PqqE.

The protein operates within cofactor biosynthesis; pyrroloquinoline quinone biosynthesis. In terms of biological role, functions as a PqqA binding protein and presents PqqA to PqqE, in the pyrroloquinoline quinone (PQQ) biosynthetic pathway. This Xanthomonas campestris pv. campestris (strain 8004) protein is PqqA binding protein.